The chain runs to 474 residues: Dipeptidase A (474 aa).

Cysteine 6 is a catalytic residue.

Belongs to the peptidase C69 family. Homooctamer.

It catalyses the reaction an L-aminoacyl-L-amino acid + H2O = 2 an L-alpha-amino acid. Its activity is regulated as follows. Inhibited by Zn(2+), Cu(2+), Ca(2+) and Cd(2+). In terms of biological role, hydrolyzes a wide range of dipeptides but unable to hydrolyze dipeptides containing proline. Highest activity against Met-Ala. In Lactobacillus helveticus (Lactobacillus suntoryeus), this protein is Dipeptidase A (pepDA).